The chain runs to 745 residues: Probable xyloglucan glycosyltransferase 3 (745 aa).

The next 2 membrane-spanning stretches (helical) occupy residues glycine 116–tryptophan 136 and isoleucine 196–valine 216. Aspartate 300 is an active-site residue. Positions 359 and 361 each coordinate substrate. Residue aspartate 453 is part of the active site. 4 helical membrane-spanning segments follow: residues leucine 531–valine 551, leucine 556–alanine 576, isoleucine 695–leucine 715, and leucine 720–isoleucine 740.

It belongs to the glycosyltransferase 2 family. Plant cellulose synthase-like C subfamily.

It is found in the golgi apparatus membrane. Probable beta-1,4-glucan synthase rather involved in the synthesis of the xyloglucan backbone than cellulose. Seems to work simultaneously with xyloglucan 6-xylosyltransferase. Xyloglucan is a noncellulosic polysaccharides of plant cell wall and consists of a glucan backbone substituted by xylose, galactose and fucose. The polypeptide is Probable xyloglucan glycosyltransferase 3 (CSLC3) (Oryza sativa subsp. japonica (Rice)).